The chain runs to 276 residues: Rhomboid protease GlpG homolog (276 aa).

6 consecutive transmembrane segments (helical) span residues 94 to 114, 142 to 162, 168 to 188, 192 to 212, 225 to 245, and 252 to 272; these read GPLT…MSII, LLLH…WYLA, SVGS…GGVI, IAGP…GYVW, LPRG…LGLF, and ADLV…TLHA.

Belongs to the peptidase S54 family.

The protein localises to the cell inner membrane. This Cronobacter sakazakii (strain ATCC BAA-894) (Enterobacter sakazakii) protein is Rhomboid protease GlpG homolog (glpG).